The following is a 233-amino-acid chain: Large ribosomal subunit protein uL1 (233 aa).

This sequence belongs to the universal ribosomal protein uL1 family. Part of the 50S ribosomal subunit.

Binds directly to 23S rRNA. The L1 stalk is quite mobile in the ribosome, and is involved in E site tRNA release. Functionally, protein L1 is also a translational repressor protein, it controls the translation of the L11 operon by binding to its mRNA. The chain is Large ribosomal subunit protein uL1 from Campylobacter jejuni subsp. doylei (strain ATCC BAA-1458 / RM4099 / 269.97).